Consider the following 179-residue polypeptide: Large ribosomal subunit protein uL6 (179 aa).

The protein belongs to the universal ribosomal protein uL6 family. In terms of assembly, part of the 50S ribosomal subunit.

Functionally, this protein binds to the 23S rRNA, and is important in its secondary structure. It is located near the subunit interface in the base of the L7/L12 stalk, and near the tRNA binding site of the peptidyltransferase center. The chain is Large ribosomal subunit protein uL6 from Acaryochloris marina (strain MBIC 11017).